The sequence spans 142 residues: ATP synthase epsilon chain (142 aa).

Belongs to the ATPase epsilon chain family. As to quaternary structure, F-type ATPases have 2 components, CF(1) - the catalytic core - and CF(0) - the membrane proton channel. CF(1) has five subunits: alpha(3), beta(3), gamma(1), delta(1), epsilon(1). CF(0) has three main subunits: a, b and c.

It is found in the cell inner membrane. Its function is as follows. Produces ATP from ADP in the presence of a proton gradient across the membrane. This Coxiella burnetii (strain CbuK_Q154) (Coxiella burnetii (strain Q154)) protein is ATP synthase epsilon chain.